The following is a 522-amino-acid chain: GMP synthase [glutamine-hydrolyzing] (522 aa).

Residues 9–204 (KILILDFGAQ…VVDICGCQTL (196 aa)) enclose the Glutamine amidotransferase type-1 domain. The active-site Nucleophile is the Cys86. Catalysis depends on residues His178 and Glu180. Residues 205-397 (WTAANIIEDQ…LGLPHAMVYR (193 aa)) enclose the GMPS ATP-PPase domain. 232 to 238 (SGGVDSS) provides a ligand contact to ATP.

Homodimer.

It carries out the reaction XMP + L-glutamine + ATP + H2O = GMP + L-glutamate + AMP + diphosphate + 2 H(+). It functions in the pathway purine metabolism; GMP biosynthesis; GMP from XMP (L-Gln route): step 1/1. In terms of biological role, catalyzes the synthesis of GMP from XMP. The chain is GMP synthase [glutamine-hydrolyzing] from Xylella fastidiosa (strain M12).